Here is a 569-residue protein sequence, read N- to C-terminus: Glutamate--tRNA ligase (569 aa).

Residues 108 to 118 carry the 'HIGH' region motif; the sequence is PNPDFVLHLGS.

The protein belongs to the class-I aminoacyl-tRNA synthetase family. Glutamate--tRNA ligase type 2 subfamily.

It localises to the cytoplasm. The enzyme catalyses tRNA(Glu) + L-glutamate + ATP = L-glutamyl-tRNA(Glu) + AMP + diphosphate. In terms of biological role, catalyzes the attachment of glutamate to tRNA(Glu) in a two-step reaction: glutamate is first activated by ATP to form Glu-AMP and then transferred to the acceptor end of tRNA(Glu). The polypeptide is Glutamate--tRNA ligase (Thermofilum pendens (strain DSM 2475 / Hrk 5)).